The sequence spans 112 residues: uncharacterized protein (112 aa).

This is an uncharacterized protein from Saccharomyces cerevisiae (strain ATCC 204508 / S288c) (Baker's yeast).